The chain runs to 295 residues: 33 kDa chaperonin (295 aa).

Disulfide bonds link cysteine 236-cysteine 238 and cysteine 269-cysteine 272.

It belongs to the HSP33 family. Post-translationally, under oxidizing conditions two disulfide bonds are formed involving the reactive cysteines. Under reducing conditions zinc is bound to the reactive cysteines and the protein is inactive.

Its subcellular location is the cytoplasm. Redox regulated molecular chaperone. Protects both thermally unfolding and oxidatively damaged proteins from irreversible aggregation. Plays an important role in the bacterial defense system toward oxidative stress. The sequence is that of 33 kDa chaperonin from Geobacter sp. (strain M21).